A 383-amino-acid polypeptide reads, in one-letter code: Chaperone protein DnaJ (383 aa).

The region spanning aspartate 4–glycine 68 is the J domain. The segment at glycine 139–glutamine 221 adopts a CR-type zinc-finger fold. 8 residues coordinate Zn(2+): cysteine 152, cysteine 155, cysteine 169, cysteine 172, cysteine 195, cysteine 198, cysteine 209, and cysteine 212. CXXCXGXG motif repeat units lie at residues cysteine 152–glycine 159, cysteine 169–glycine 176, cysteine 195–glycine 202, and cysteine 209–glycine 216.

Belongs to the DnaJ family. In terms of assembly, homodimer. It depends on Zn(2+) as a cofactor.

Its subcellular location is the cytoplasm. Functionally, participates actively in the response to hyperosmotic and heat shock by preventing the aggregation of stress-denatured proteins and by disaggregating proteins, also in an autonomous, DnaK-independent fashion. Unfolded proteins bind initially to DnaJ; upon interaction with the DnaJ-bound protein, DnaK hydrolyzes its bound ATP, resulting in the formation of a stable complex. GrpE releases ADP from DnaK; ATP binding to DnaK triggers the release of the substrate protein, thus completing the reaction cycle. Several rounds of ATP-dependent interactions between DnaJ, DnaK and GrpE are required for fully efficient folding. Also involved, together with DnaK and GrpE, in the DNA replication of plasmids through activation of initiation proteins. In Gloeobacter violaceus (strain ATCC 29082 / PCC 7421), this protein is Chaperone protein DnaJ.